A 193-amino-acid chain; its full sequence is Major structural subunit of bundle-forming pilus (193 aa).

Positions 1 to 13 (MVSKIMNKKYEKG) are cleaved as a propeptide — leader sequence. An N-methylleucine modification is found at leucine 14. The chain crosses the membrane as a helical span at residues 14–35 (LSLIESAMVLALAATVTAGVMF). Cysteine 129 and cysteine 179 form a disulfide bridge.

The protein belongs to the N-Me-Phe pilin family. 10 to 100 laterally aligned filaments or bundle-forming pili coalesce into rope-like bundles. These form linkages between the bacteria within the enteropathogenic E.coli (EPEC) microcolonies that are attached to epithelial cells.

The protein resides in the fimbrium. The protein localises to the membrane. In terms of biological role, major component of type IV bundle-forming pili (BFP) that plays a role in adherence to host cells and virulence. The sequence is that of Major structural subunit of bundle-forming pilus (bfpA) from Escherichia coli O127:H6 (strain E2348/69 / EPEC).